Reading from the N-terminus, the 330-residue chain is Aquaporin Lacbi1:307192 (330 aa).

The Cytoplasmic portion of the chain corresponds to 1–40 (MSATPIIHLRDVKKRTGVLNAWERVRNKPQVHWAMECFAE). Residues 41-61 (ALGVFFYVYFGLGSTAAWVIG) form a helical membrane-spanning segment. The Extracellular portion of the chain corresponds to 62-71 (NILKQSGLSS). A helical transmembrane segment spans residues 72-92 (VFQIGFAYAFGILFAIGVCAA). The Cytoplasmic portion of the chain corresponds to 93–124 (TSGGHFNPCVTIAFTIFRGFPPLKAVRYIVAQ). The short motif at 99-101 (NPC) is the NPA 1 element. The chain crosses the membrane as a helical span at residues 125–145 (ILGAYIASALVYNQWKVLIVE). Residues 146–157 (SELLLKQAGVYE) are Extracellular-facing. Residues 158–178 (TTMFTPNGPAGIFALYLLPGA) form a helical membrane-spanning segment. Topologically, residues 179 to 183 (QTLPR) are cytoplasmic. The helical transmembrane segment at 184–204 (AFLNEFVNCFVLALVIWAALD) threads the bilayer. Topologically, residues 205 to 207 (PTS) are extracellular. A helical transmembrane segment spans residues 208-228 (FMIPPVMAPFIIAAAYAGSIW). The Cytoplasmic segment spans residues 229–264 (GYAVPAISLNSARDIGCRLFALTIWGKSAAGGSYSA). The short motif at 238 to 240 (NSA) is the NPA 2 element. Residues 265–285 (ITALVNIPATLLAAVVYELFL) traverse the membrane as a helical segment. Topologically, residues 286-330 (VDSDRVVAGSHLEFMNVAANHRRHRHQAEDDNHGDADDSSQEKPV) are extracellular. A disordered region spans residues 308-330 (RHRHQAEDDNHGDADDSSQEKPV). A compositionally biased stretch (basic and acidic residues) spans 312–330 (QAEDDNHGDADDSSQEKPV).

This sequence belongs to the MIP/aquaporin (TC 1.A.8) family.

It localises to the membrane. Functionally, water channel-like protein that does not show transport of water nor ammonium across membranes. This Laccaria bicolor (strain S238N-H82 / ATCC MYA-4686) (Bicoloured deceiver) protein is Aquaporin Lacbi1:307192.